The primary structure comprises 322 residues: MAENGAARGGTSAGGDSSTPFVELGRADWAELAQSARLPLQEAEIVQLRGLGDPLDMREVGEVYLPLSRLLNLYVGGTRQLHRVTSDFLGERAQATPFVIGVAGSVAVGKSTIARLLRELLSRWDDTPRVELVTTDGFLLPNAELERRGLMRRKGFPESYDRRALLRFVTAVKSGAREVRAPFYSHLSYDIVPGAEIVVRQPDVLIVEGLTVLQPAGGGTRLAVSDLFDFSVYVDARTRDIAHWYQERFLTLQRGAFANPKSYFHRYASLTEEEARARAAAIWADINEPNLTQNIRPTRSRAKLVLRKDADHTVSSVLLRKI.

An ATP-binding site is contributed by 104–111; the sequence is GSVAVGKS.

It belongs to the prokaryotic pantothenate kinase family.

It is found in the cytoplasm. The enzyme catalyses (R)-pantothenate + ATP = (R)-4'-phosphopantothenate + ADP + H(+). The protein operates within cofactor biosynthesis; coenzyme A biosynthesis; CoA from (R)-pantothenate: step 1/5. This chain is Pantothenate kinase, found in Leifsonia xyli subsp. xyli (strain CTCB07).